A 740-amino-acid chain; its full sequence is Catalase-peroxidase (740 aa).

An N-terminal signal peptide occupies residues 1 to 27 (MFKSTLPIAAAISVALTSMVLPAKALA). Positions 106–228 (WHSAGVYRVH…LAAVEMGLIY (123 aa)) form a cross-link, tryptophyl-tyrosyl-methioninium (Trp-Tyr) (with M-254). The Proton acceptor role is filled by His107. Positions 228–254 (YVNPEGPHGKPDPLLAANDIRMSFGRM) form a cross-link, tryptophyl-tyrosyl-methioninium (Tyr-Met) (with W-106). His269 serves as a coordination point for heme b.

This sequence belongs to the peroxidase family. Peroxidase/catalase subfamily. Homodimer or homotetramer. Requires heme b as cofactor. Formation of the three residue Trp-Tyr-Met cross-link is important for the catalase, but not the peroxidase activity of the enzyme.

The catalysed reaction is H2O2 + AH2 = A + 2 H2O. It catalyses the reaction 2 H2O2 = O2 + 2 H2O. Bifunctional enzyme with both catalase and broad-spectrum peroxidase activity. The protein is Catalase-peroxidase of Colwellia psychrerythraea (strain 34H / ATCC BAA-681) (Vibrio psychroerythus).